Here is a 122-residue protein sequence, read N- to C-terminus: MIQTESRLQVADNTGASEVLCIKVLGGSKRRYASIGDVIKVSVKSAAPRGRVKKGDIYNAVVVRTAKGVRRPDGSLIKFDANAAVLLNAKLEPIGTRIFGPVTRELRTEKFMKIVSLAPEVI.

Belongs to the universal ribosomal protein uL14 family. As to quaternary structure, part of the 50S ribosomal subunit. Forms a cluster with proteins L3 and L19. In the 70S ribosome, L14 and L19 interact and together make contacts with the 16S rRNA in bridges B5 and B8.

Its function is as follows. Binds to 23S rRNA. Forms part of two intersubunit bridges in the 70S ribosome. The protein is Large ribosomal subunit protein uL14 of Polynucleobacter asymbioticus (strain DSM 18221 / CIP 109841 / QLW-P1DMWA-1) (Polynucleobacter necessarius subsp. asymbioticus).